A 972-amino-acid polypeptide reads, in one-letter code: C-1-tetrahydrofolate synthase, mitochondrial (972 aa).

Residues 1 to 55 (MNVMVSFNQLRNYFLESNSLRPSKWLFQSYGTSSSANILNGKLLARKLQRSVAEE) constitute a mitochondrion transit peptide. The methylenetetrahydrofolate dehydrogenase and cyclohydrolase stretch occupies residues 56–340 (VQALKAKDRN…DLNPLELKKP (285 aa)). Substrate is bound by residues 84 to 88 (YVRMK) and 131 to 133 (VQL). NADP(+) is bound by residues 202–204 (GRS) and Ser227. 299–303 (PGGVG) is a substrate binding site. The formyltetrahydrofolate synthetase stretch occupies residues 341–972 (VPSDIEIANS…CENGEIVGLS (632 aa)). An ATP-binding site is contributed by 405-412 (TPFGEGKS).

It in the N-terminal section; belongs to the tetrahydrofolate dehydrogenase/cyclohydrolase family. In the C-terminal section; belongs to the formate--tetrahydrofolate ligase family. In terms of assembly, homodimer.

It localises to the mitochondrion. It carries out the reaction (6R)-5,10-methylene-5,6,7,8-tetrahydrofolate + NADP(+) = (6R)-5,10-methenyltetrahydrofolate + NADPH. It catalyses the reaction (6R)-5,10-methenyltetrahydrofolate + H2O = (6R)-10-formyltetrahydrofolate + H(+). The enzyme catalyses (6S)-5,6,7,8-tetrahydrofolate + formate + ATP = (6R)-10-formyltetrahydrofolate + ADP + phosphate. The protein operates within one-carbon metabolism; tetrahydrofolate interconversion. In terms of biological role, mitochondrial isozyme of C-1-tetrahydrofolate synthase. The trifunctional enzyme catalyzes the interconversion of the one-carbon derivatives of tetrahydrofolate (THF) between different oxidation states by the enzymatic activities 10-formyltetrahydrofolate synthetase, 5,lO-methenyltetrahydrofolate cyclohydrolase, and 5,lO-methylenetetrahydrofolate dehydrogenase. This is C-1-tetrahydrofolate synthase, mitochondrial (ade9) from Schizosaccharomyces pombe (strain 972 / ATCC 24843) (Fission yeast).